The sequence spans 156 residues: Arginine repressor (156 aa).

The protein belongs to the ArgR family.

It localises to the cytoplasm. Its pathway is amino-acid biosynthesis; L-arginine biosynthesis [regulation]. Its function is as follows. Regulates arginine biosynthesis genes. The protein is Arginine repressor of Shewanella putrefaciens (strain CN-32 / ATCC BAA-453).